The chain runs to 663 residues: Protein-arginine deiminase type-1 (663 aa).

Ca(2+) is bound by residues Asn153, Asp155, Asp157, Asp165, Asp176, Asp179, Gln351, Glu353, Lys364, Asp371, Ser372, Asn375, Phe409, and Leu412. Cys645 (nucleophile) is an active-site residue.

It belongs to the protein arginine deiminase family. Monomer. The cofactor is Ca(2+). In terms of tissue distribution, detected in epidermal keratinocytes (at protein level). Epidermis, prostate, testis, placenta, spleen and thymus.

The protein localises to the cytoplasm. The catalysed reaction is L-arginyl-[protein] + H2O = L-citrullyl-[protein] + NH4(+). Functionally, catalyzes the deimination of arginine residues of proteins. In Homo sapiens (Human), this protein is Protein-arginine deiminase type-1 (PADI1).